The following is a 117-amino-acid chain: Large-conductance mechanosensitive channel (117 aa).

A run of 3 helical transmembrane segments spans residues 7–27 (EFAL…GAAF), 30–50 (IVTA…FGTV), and 64–84 (GMFV…FIFV).

The protein belongs to the MscL family. In terms of assembly, homopentamer.

The protein localises to the cell membrane. In terms of biological role, channel that opens in response to stretch forces in the membrane lipid bilayer. May participate in the regulation of osmotic pressure changes within the cell. The chain is Large-conductance mechanosensitive channel from Staphylococcus saprophyticus subsp. saprophyticus (strain ATCC 15305 / DSM 20229 / NCIMB 8711 / NCTC 7292 / S-41).